The primary structure comprises 312 residues: Ribosomal RNA small subunit methyltransferase H (312 aa).

Residues 35–37 (GGH), D55, F85, D101, and Q108 each bind S-adenosyl-L-methionine.

The protein belongs to the methyltransferase superfamily. RsmH family.

The protein resides in the cytoplasm. The enzyme catalyses cytidine(1402) in 16S rRNA + S-adenosyl-L-methionine = N(4)-methylcytidine(1402) in 16S rRNA + S-adenosyl-L-homocysteine + H(+). Functionally, specifically methylates the N4 position of cytidine in position 1402 (C1402) of 16S rRNA. This chain is Ribosomal RNA small subunit methyltransferase H, found in Buchnera aphidicola subsp. Acyrthosiphon pisum (strain Tuc7).